Consider the following 24-residue polypeptide: 47 kDa cell wall protein (24 aa).

It localises to the secreted. It is found in the cell wall. The sequence is that of 47 kDa cell wall protein from Nicotiana tabacum (Common tobacco).